The sequence spans 491 residues: Glycogen synthase (491 aa).

Residue Lys15 participates in ADP-alpha-D-glucose binding.

This sequence belongs to the glycosyltransferase 1 family. Bacterial/plant glycogen synthase subfamily.

It carries out the reaction [(1-&gt;4)-alpha-D-glucosyl](n) + ADP-alpha-D-glucose = [(1-&gt;4)-alpha-D-glucosyl](n+1) + ADP + H(+). It participates in glycan biosynthesis; glycogen biosynthesis. Synthesizes alpha-1,4-glucan chains using ADP-glucose. The protein is Glycogen synthase of Treponema denticola (strain ATCC 35405 / DSM 14222 / CIP 103919 / JCM 8153 / KCTC 15104).